Reading from the N-terminus, the 218-residue chain is Autophagy-related protein 101 (218 aa).

This sequence belongs to the ATG101 family.

It is found in the cytoplasm. The protein resides in the preautophagosomal structure. In terms of biological role, autophagy factor required for autophagosome formation. This chain is Autophagy-related protein 101 (atg101), found in Xenopus laevis (African clawed frog).